The primary structure comprises 158 residues: uncharacterized protein (158 aa).

The region spanning 13–110 is the HTH hxlR-type domain; the sequence is ESVGRALELV…WGDEYLPRPE (98 aa).

This is an uncharacterized protein from Mycobacterium tuberculosis (strain ATCC 25618 / H37Rv).